Here is a 60-residue protein sequence, read N- to C-terminus: Small, acid-soluble spore protein C2 (60 aa).

It belongs to the alpha/beta-type SASP family. Post-translationally, SASP are degraded in the first minutes of spore germination and provide amino acids for both new protein synthesis and metabolism.

Its function is as follows. SASP are bound to spore DNA. They are double-stranded DNA-binding proteins that cause DNA to change to an a-like conformation. They protect the DNA backbone from chemical and enzymatic cleavage and are thus involved in dormant spore's high resistance to UV light. This is Small, acid-soluble spore protein C2 (sspC2) from Clostridium perfringens (strain 13 / Type A).